Reading from the N-terminus, the 1457-residue chain is NBPF family member NBPF12 (1457 aa).

Positions R75–A119 form a coiled coil. A disordered region spans residues L162–P200. A compositionally biased stretch (acidic residues) spans E165–K181. The Olduvai 1 domain maps to E165–P259. Residues E190–P200 show a composition bias toward basic and acidic residues. Positions K339–A390 form a coiled coil. The interval K432 to E472 is disordered. Positions E436–K452 are enriched in acidic residues. In terms of domain architecture, Olduvai 2 spans E436–P530. The segment covering E461 to E472 has biased composition (basic and acidic residues). A coiled-coil region spans residues K610–A661. Olduvai domains are found at residues E707–P799, E800–G871, R872–P963, S966–D1021, R1022–K1114, K1115–P1207, S1210–D1265, R1266–K1358, and K1359–Q1457. 2 disordered regions span residues A721–L746 and W791–T838. Acidic residues-rich tracts occupy residues N801 to E810 and E821 to D833. The interval K1100 to L1139 is disordered. The segment covering G1102–R1120 has biased composition (basic residues). The segment at K1344–L1378 is disordered. The segment covering G1346–R1364 has biased composition (basic residues).

This sequence belongs to the NBPF family. In terms of tissue distribution, widely expressed with highest levels in brain, ovary, mammary gland, skin and adipose tissue. Also expressed in testis. Detected in a number of tumors including osteosarcoma, mammary carcinoma and hepatocellular carcinoma.

It is found in the cytoplasm. This chain is NBPF family member NBPF12, found in Homo sapiens (Human).